A 1374-amino-acid chain; its full sequence is Sterol 3-beta-glucosyltransferase (1374 aa).

A compositionally biased stretch (basic and acidic residues) spans 1–14; that stretch reads MRPLRDDAKRRADR. 3 disordered regions span residues 1–60, 83–190, and 206–227; these read MRPL…RDGN, ARFD…PRAA, and TSATPYLPPNNPDKSMEDQPQS. The segment covering 16–28 has biased composition (polar residues); it reads LSASMKPTSSNRP. Basic and acidic residues predominate over residues 29–41; it reads FSDRVPDRFKDGD. A compositionally biased stretch (polar residues) spans 101 to 112; sequence VEQTTGKASSRT. Positions 125 to 138 are enriched in basic and acidic residues; it reads KRSEPSKLVLEERG. The GRAM 1 domain occupies 234–283; the sequence is MRLMKMFEFAKPEKVLVEYACSLLQSMLLQGYMYVTEGHICFYAYLPKKS. Positions 285-382 constitute a PH domain; sequence VAIKSGYLSK…WVKALQQVIF (98 aa). Residues 458 to 538 are disordered; sequence ATKEAQDQHD…SMTDTTESAS (81 aa). Basic and acidic residues-rich tracts occupy residues 461–473 and 490–499; these read EAQDQHDIKHQPE and SDQRREDSPR. Polar residues predominate over residues 503–538; that stretch reads SSVGNENQGSADSFAEQGTGSSPIIQSMTDTTESAS. A GRAM 2 domain is found at 704–770; sequence DRFRAHFALP…KDIENVEKEK (67 aa). Ser-893, Arg-894, Asp-896, Ala-1196, His-1198, His-1211, Gly-1215, Thr-1216, Asp-1235, and Gln-1236 together coordinate UDP-alpha-D-glucose. The segment covering 1314 to 1325 has biased composition (polar residues); that stretch reads ASSTPFSPTPTA. Positions 1314–1338 are disordered; sequence ASSTPFSPTPTAKASPDGGDDDLDD.

Belongs to the glycosyltransferase 28 family.

Its subcellular location is the cytoplasm. It is found in the preautophagosomal structure membrane. The enzyme catalyses a sterol + UDP-alpha-D-glucose = a sterol 3-beta-D-glucoside + UDP + H(+). It carries out the reaction ergosterol + UDP-alpha-D-glucose = ergosteryl 3-beta-D-glucoside + UDP + H(+). In terms of biological role, sterol glycosyltransferase responsible for the glycosylation of ergosterol to form ergosterol-glucoside. The polypeptide is Sterol 3-beta-glucosyltransferase (Penicillium rubens (strain ATCC 28089 / DSM 1075 / NRRL 1951 / Wisconsin 54-1255) (Penicillium chrysogenum)).